Here is a 427-residue protein sequence, read N- to C-terminus: 5-hydroxybenzimidazole synthase BzaB (427 aa).

It belongs to the ThiC family. 5-hydroxybenzimidazole synthase subfamily. [4Fe-4S] cluster serves as cofactor.

It catalyses the reaction 5-amino-1-(5-phospho-beta-D-ribosyl)imidazole + AH2 + S-adenosyl-L-methionine = 5-hydroxybenzimidazole + 5'-deoxyadenosine + formate + L-methionine + A + NH4(+) + phosphate + 2 H(+). The protein operates within cofactor biosynthesis; adenosylcobalamin biosynthesis. In terms of biological role, together with BzaA, catalyzes the conversion of aminoimidazole ribotide (AIR) to 5-hydroxybenzimidazole (5-HBI) in a radical S-adenosyl-L-methionine (SAM)-dependent reaction. Is thus involved in the anaerobic biosynthesis of dimethylbenzimidazole (DMB), the lower axial ligand of vitamin B12 (cobalamin). Requires BzaA for catalytic activity, as BzaB alone displays no activity. The sequence is that of 5-hydroxybenzimidazole synthase BzaB from Eubacterium limosum.